Here is a 357-residue protein sequence, read N- to C-terminus: Neurogenic differentiation factor 1 (357 aa).

Positions 1–94 (MTKSYSESGL…GPKKKKMTKA (94 aa)) are disordered. The span at 58–78 (EEEDEDEDLEEEEEEEEEEDD) shows a compositional bias: acidic residues. A compositionally biased stretch (basic residues) spans 81-93 (PKRRGPKKKKMTK). A Nuclear localization signal motif is present at residues 87–93 (KKKKMTK). The 53-residue stretch at 101–153 (LRRMKANARERNRMHGLNAALDNLRKVVPCYSKTQKLSKIETLRLAKNYIWAL) folds into the bHLH domain. Phosphoserine occurs at positions 162, 259, 266, and 274. S336 carries the phosphoserine; by CaMK2 modification.

Efficient DNA-binding requires dimerization with another bHLH protein. Heterodimer with TCF3/E47; the heterodimer is inhibited in presence of ID2, but not NR0B2, to E-box element. Interacts with EP300; the interaction is inhibited by NR0B2. Interacts with RREB1. Interacts with ATOH8. Post-translationally, phosphorylated by MAPK1; phosphorylation regulates heterodimerization and DNA-binding activities. Phosphorylation on Ser-266 and Ser-274 increases transactivation on the insulin promoter in glucose-stimulated insulinoma cells. Phosphorylated. In islet cells, phosphorylated on Ser-274 upon glucose stimulation; which may be required for nuclear localization. In activated neurons, phosphorylated on Ser-336 by CaMK2; which promotes dendritic growth.

The protein resides in the cytoplasm. The protein localises to the nucleus. Functionally, acts as a transcriptional activator: mediates transcriptional activation by binding to E box-containing promoter consensus core sequences 5'-CANNTG-3'. Associates with the p300/CBP transcription coactivator complex to stimulate transcription of the secretin gene as well as the gene encoding the cyclin-dependent kinase inhibitor CDKN1A. Contributes to the regulation of several cell differentiation pathways, like those that promote the formation of early retinal ganglion cells, inner ear sensory neurons, granule cells forming either the cerebellum or the dentate gyrus cell layer of the hippocampus, endocrine islet cells of the pancreas and enteroendocrine cells of the small intestine. Together with PAX6 or SIX3, is required for the regulation of amacrine cell fate specification. Also required for dendrite morphogenesis and maintenance in the cerebellar cortex. Associates with chromatin to enhancer regulatory elements in genes encoding key transcriptional regulators of neurogenesis. This is Neurogenic differentiation factor 1 (Neurod1) from Rattus norvegicus (Rat).